A 300-amino-acid polypeptide reads, in one-letter code: tRNA-cytidine(32) 2-sulfurtransferase (300 aa).

A PP-loop motif motif is present at residues Ser-41–Ser-46. [4Fe-4S] cluster is bound by residues Cys-116, Cys-119, and Cys-207.

This sequence belongs to the TtcA family. As to quaternary structure, homodimer. The cofactor is Mg(2+). It depends on [4Fe-4S] cluster as a cofactor.

The protein localises to the cytoplasm. The enzyme catalyses cytidine(32) in tRNA + S-sulfanyl-L-cysteinyl-[cysteine desulfurase] + AH2 + ATP = 2-thiocytidine(32) in tRNA + L-cysteinyl-[cysteine desulfurase] + A + AMP + diphosphate + H(+). It participates in tRNA modification. In terms of biological role, catalyzes the ATP-dependent 2-thiolation of cytidine in position 32 of tRNA, to form 2-thiocytidine (s(2)C32). The sulfur atoms are provided by the cysteine/cysteine desulfurase (IscS) system. The chain is tRNA-cytidine(32) 2-sulfurtransferase from Idiomarina loihiensis (strain ATCC BAA-735 / DSM 15497 / L2-TR).